Reading from the N-terminus, the 229-residue chain is (S)-2-haloacid dehalogenase 2 (229 aa).

The active-site Nucleophile is D10. An (S)-2-haloacid contacts are provided by residues 11–12 (LY), R41, and 118–119 (SN). Positions 175–180 (SSNAWD) are important for catalytic activity.

This sequence belongs to the HAD-like hydrolase superfamily. S-2-haloalkanoic acid dehalogenase family.

It carries out the reaction an (S)-2-haloacid + H2O = a (2R)-2-hydroxycarboxylate + a halide anion + H(+). It catalyses the reaction (S)-2-chloropropanoate + H2O = (R)-lactate + chloride + H(+). In terms of biological role, catalyzes the hydrolytic dehalogenation of small (S)-2-haloalkanoic acids to yield the corresponding (R)-2-hydroxyalkanoic acids. Acts on acids of short chain lengths, C(2) to C(4), with inversion of configuration at C-2. Active with 2-halogenated carboxylic acids and converts only the S-isomer (or L-isomer) of 2-chloropropionic acid with inversion of configuration to produce R-lactate (or D-isomer). This Pseudomonas sp. (strain CBS-3) protein is (S)-2-haloacid dehalogenase 2.